The sequence spans 89 residues: Small ribosomal subunit protein uS15 (89 aa).

Belongs to the universal ribosomal protein uS15 family. Part of the 30S ribosomal subunit. Forms a bridge to the 50S subunit in the 70S ribosome, contacting the 23S rRNA.

Its function is as follows. One of the primary rRNA binding proteins, it binds directly to 16S rRNA where it helps nucleate assembly of the platform of the 30S subunit by binding and bridging several RNA helices of the 16S rRNA. Forms an intersubunit bridge (bridge B4) with the 23S rRNA of the 50S subunit in the ribosome. The protein is Small ribosomal subunit protein uS15 of Buchnera aphidicola subsp. Baizongia pistaciae (strain Bp).